A 135-amino-acid chain; its full sequence is Protein Wnt-7a (135 aa).

Intrachain disulfides connect Cys-3–Cys-17 and Cys-5–Cys-12. Ser-9 carries the O-palmitoleoyl serine; by PORCN lipid modification. The tract at residues 41-69 (VEPVRASRNKRPTFLKIKKPLSYRKPMDT) is disordered linker. Cystine bridges form between Cys-81-Cys-112, Cys-97-Cys-107, Cys-111-Cys-134, and Cys-130-Cys-131. Asn-98 carries an N-linked (GlcNAc...) asparagine glycan.

It belongs to the Wnt family. Post-translationally, palmitoleoylation is required for efficient binding to frizzled receptors. Depalmitoleoylation leads to Wnt signaling pathway inhibition. In terms of tissue distribution, in embryo, in brain and ventral neural tube; in adults, in brain.

Its subcellular location is the secreted. It localises to the extracellular space. The protein resides in the extracellular matrix. Its function is as follows. Ligand for members of the frizzled family of seven transmembrane receptors that functions in the canonical Wnt/beta-catenin signaling pathway. Plays an important role in embryonic development, including dorsal versus ventral patterning during limb development, skeleton development and urogenital tract development. Required for central nervous system (CNS) angiogenesis and blood-brain barrier regulation. The protein is Protein Wnt-7a (wnt7a) of Xenopus laevis (African clawed frog).